Here is a 235-residue protein sequence, read N- to C-terminus: Type III pantothenate kinase (235 aa).

Residue 6 to 13 coordinates ATP; the sequence is DVGNTSLK. Residues Y79 and 86–89 each bind substrate; that span reads GIDR. D88 functions as the Proton acceptor in the catalytic mechanism. Residue D109 participates in K(+) binding. Residue T112 participates in ATP binding. Residue T164 coordinates substrate.

The protein belongs to the type III pantothenate kinase family. As to quaternary structure, homodimer. NH4(+) is required as a cofactor. K(+) serves as cofactor.

It is found in the cytoplasm. It catalyses the reaction (R)-pantothenate + ATP = (R)-4'-phosphopantothenate + ADP + H(+). It functions in the pathway cofactor biosynthesis; coenzyme A biosynthesis; CoA from (R)-pantothenate: step 1/5. Catalyzes the phosphorylation of pantothenate (Pan), the first step in CoA biosynthesis. This Pseudoalteromonas translucida (strain TAC 125) protein is Type III pantothenate kinase.